Reading from the N-terminus, the 332-residue chain is UPF0158 protein TC_0713 (332 aa).

Disordered regions lie at residues 196-215 (ALNP…KVEA) and 291-332 (LGYD…KARS). A compositionally biased stretch (acidic residues) spans 295-316 (GDGDASDFFGEEYDDDDDDDDD). The segment covering 320–332 (KKAAKRGRKKARS) has biased composition (basic residues).

The protein belongs to the UPF0158 family.

The sequence is that of UPF0158 protein TC_0713 from Chlamydia muridarum (strain MoPn / Nigg).